We begin with the raw amino-acid sequence, 116 residues long: Large ribosomal subunit protein bL20 (116 aa).

This sequence belongs to the bacterial ribosomal protein bL20 family.

Its function is as follows. Binds directly to 23S ribosomal RNA and is necessary for the in vitro assembly process of the 50S ribosomal subunit. It is not involved in the protein synthesizing functions of that subunit. This chain is Large ribosomal subunit protein bL20, found in Nitratiruptor sp. (strain SB155-2).